The following is a 262-amino-acid chain: 5'-nucleotidase SurE (262 aa).

Asp11, Asp12, Ser43, and Asn101 together coordinate a divalent metal cation.

The protein belongs to the SurE nucleotidase family. A divalent metal cation is required as a cofactor.

It is found in the cytoplasm. It carries out the reaction a ribonucleoside 5'-phosphate + H2O = a ribonucleoside + phosphate. Nucleotidase that shows phosphatase activity on nucleoside 5'-monophosphates. This is 5'-nucleotidase SurE from Prochlorococcus marinus (strain NATL1A).